The primary structure comprises 232 residues: 26.5 kDa heat shock protein, mitochondrial (232 aa).

The N-terminal 42 residues, 1–42 (MALARLALRNLQQKLSPSLMGQSCERGLVGNRHNPMKLNRFM), are a transit peptide targeting the mitochondrion. A disordered region spans residues 44–82 (TSAGEQEDKMNTEVSVSEKKSPRQNFPRRRGRKSLWRNT). The span at 49-64 (QEDKMNTEVSVSEKKS) shows a compositional bias: basic and acidic residues. The span at 69–78 (FPRRRGRKSL) shows a compositional bias: basic residues. The sHSP domain maps to 114 to 232 (IFDNFNVNPF…KKNVQEISVE (119 aa)).

Belongs to the small heat shock protein (HSP20) family. As to quaternary structure, may form oligomeric structures.

The protein localises to the mitochondrion. This chain is 26.5 kDa heat shock protein, mitochondrial (HSP26.5), found in Arabidopsis thaliana (Mouse-ear cress).